The following is a 429-amino-acid chain: MTSIAVVGSQWGDEGKGKITDFLGTTADLSVRANGGNNAGHTIDFDGKEFKMRLIPSGIFAAKLGAVISNGVVINPKVLLGELNNLEKSGIDTSNLKISNRAHIIMPYHIMQDTYEEEAKGNLKVGTTKNGIGPTYMDKASRIGIRVCDLIDPETFAEKLRFNLERKNALFTKVYGKPAMDFDEIYNEYVEYGKRIAKYVCDTSLYVNDALDRNEKVLFEGAQGIMLDIDQGTYPFVSSSNSVSGGIASGSGIGANRIKTVLGICKAYTTRVGAGPFPTELHDETGDKIRDIAHEYGTVTGRPRRVGWFDSVALRHAKRVAGINALSLNLLDVFSGFDKIKICVAYDLNGKQIDYYPASLKEVEACQPIYEELPAWEEDITGAKSWEDLPEKAQAFVKRISEITGIPVVTVSVGPDREQTIVLQDPWTL.

GTP is bound by residues 12-18 (GDEGKGK) and 40-42 (GHT). Residue Asp13 is the Proton acceptor of the active site. Mg(2+)-binding residues include Asp13 and Gly40. IMP-binding positions include 13 to 16 (DEGK), 38 to 41 (NAGH), Thr128, Arg142, Gln223, and Arg302. His41 functions as the Proton donor in the catalytic mechanism. 298 to 304 (TVTGRPR) is a substrate binding site. Residues Arg304, 330–332 (LLD), and 412–414 (SVG) each bind GTP.

This sequence belongs to the adenylosuccinate synthetase family. In terms of assembly, homodimer. The cofactor is Mg(2+).

The protein localises to the cytoplasm. It carries out the reaction IMP + L-aspartate + GTP = N(6)-(1,2-dicarboxyethyl)-AMP + GDP + phosphate + 2 H(+). Its pathway is purine metabolism; AMP biosynthesis via de novo pathway; AMP from IMP: step 1/2. Plays an important role in the de novo pathway of purine nucleotide biosynthesis. Catalyzes the first committed step in the biosynthesis of AMP from IMP. In Lactobacillus delbrueckii subsp. bulgaricus (strain ATCC 11842 / DSM 20081 / BCRC 10696 / JCM 1002 / NBRC 13953 / NCIMB 11778 / NCTC 12712 / WDCM 00102 / Lb 14), this protein is Adenylosuccinate synthetase.